A 475-amino-acid polypeptide reads, in one-letter code: ATP synthase subunit beta, chloroplastic (475 aa).

Residue 155-162 (GGAGVGKT) participates in ATP binding.

The protein belongs to the ATPase alpha/beta chains family. In terms of assembly, F-type ATPases have 2 components, CF(1) - the catalytic core - and CF(0) - the membrane proton channel. CF(1) has five subunits: alpha(3), beta(3), gamma(1), delta(1), epsilon(1). CF(0) has four main subunits: a(1), b(1), b'(1) and c(9-12).

Its subcellular location is the plastid. The protein resides in the chloroplast thylakoid membrane. It catalyses the reaction ATP + H2O + 4 H(+)(in) = ADP + phosphate + 5 H(+)(out). Produces ATP from ADP in the presence of a proton gradient across the membrane. The catalytic sites are hosted primarily by the beta subunits. In Guillardia theta (Cryptophyte), this protein is ATP synthase subunit beta, chloroplastic.